The primary structure comprises 194 residues: MPSLLLWTGLGNPEPGMALQRHNIGFMAVDAIAQRHGFTPWRNRFKGLTAEGTLAGRKIILLKPMTYMNASGESVQPATAFFKLPPEAVSAFHDELDLAPGKVRVKRGGGAAGHNGLRSMDRMLGTPEYWRVRLGIGHPGSKERVHGHVLGNFAKSDQEWLGPLLEAVADAAPLLAEGRAEDFMTRIALLTHRQ.

The active-site Proton acceptor is the His-22. TRNA is bound by residues Tyr-67, Asn-69, and Asn-115.

It belongs to the PTH family. In terms of assembly, monomer.

The protein resides in the cytoplasm. It catalyses the reaction an N-acyl-L-alpha-aminoacyl-tRNA + H2O = an N-acyl-L-amino acid + a tRNA + H(+). In terms of biological role, hydrolyzes ribosome-free peptidyl-tRNAs (with 1 or more amino acids incorporated), which drop off the ribosome during protein synthesis, or as a result of ribosome stalling. Functionally, catalyzes the release of premature peptidyl moieties from peptidyl-tRNA molecules trapped in stalled 50S ribosomal subunits, and thus maintains levels of free tRNAs and 50S ribosomes. The polypeptide is Peptidyl-tRNA hydrolase (Granulibacter bethesdensis (strain ATCC BAA-1260 / CGDNIH1)).